The following is a 146-amino-acid chain: Hemoglobin subunit beta (146 aa).

At Val1 the chain carries N-acetylvaline. The region spanning 2 to 146 is the Globin domain; the sequence is HLTGEEKSTV…VATALAHKYH (145 aa). At Ser44 the chain carries Phosphoserine. Lys59 bears the N6-acetyllysine mark. A heme b-binding site is contributed by His63. Lys82 carries the post-translational modification N6-acetyllysine. His92 contributes to the heme b binding site. Position 93 is an S-nitrosocysteine (Cys93). An N6-acetyllysine modification is found at Lys144.

This sequence belongs to the globin family. As to quaternary structure, heterotetramer of two alpha chains and two beta chains. In terms of tissue distribution, red blood cells.

In terms of biological role, involved in oxygen transport from the lung to the various peripheral tissues. This is Hemoglobin subunit beta (HBB) from Macrotus californicus (Californian leaf-nosed bat).